The sequence spans 221 residues: Putative transmembrane protein ORF25 (221 aa).

The signal sequence occupies residues 1–23 (MTLAAKLIVLVYVALCFVNESTS). N-linked (GlcNAc...) asparagine; by host glycans are attached at residues Asn19 and Asn179. The Extracellular segment spans residues 24–191 (QDHSNIYHET…LAKARGVPMS (168 aa)). Residues 192-212 (VSVISGICAIILVIFPIFITI) form a helical membrane-spanning segment. The Cytoplasmic portion of the chain corresponds to 213–221 (ANLRRVYLH).

The protein localises to the host membrane. The chain is Putative transmembrane protein ORF25 from Ostreid herpesvirus 1 (isolate France) (OsHV-1).